The primary structure comprises 102 residues: RNA-binding protein Hfq (102 aa).

A Sm domain is found at 9-68 (DPFLNALRRERVPVSIYLVNGIKLQGQIESFDQFVILLKNTVSQMVYKHAISTVVPSRPV). The segment at 63-102 (VPSRPVSHHSNNAGGGTSSNYHHGSSAQNTSAQQDSEETE) is disordered. Residues 70–96 (HHSNNAGGGTSSNYHHGSSAQNTSAQQ) are compositionally biased toward polar residues.

It belongs to the Hfq family. Homohexamer.

Functionally, RNA chaperone that binds small regulatory RNA (sRNAs) and mRNAs to facilitate mRNA translational regulation in response to envelope stress, environmental stress and changes in metabolite concentrations. Also binds with high specificity to tRNAs. This Escherichia fergusonii (strain ATCC 35469 / DSM 13698 / CCUG 18766 / IAM 14443 / JCM 21226 / LMG 7866 / NBRC 102419 / NCTC 12128 / CDC 0568-73) protein is RNA-binding protein Hfq.